The sequence spans 1034 residues: N-acetyl-beta-glucosaminyl-glycoprotein 4-beta-N-acetylgalactosaminyltransferase 1 (1034 aa).

The Cytoplasmic segment spans residues 1-12 (MPWFPVKKVRKQ). Residues 13–31 (MKLLLLLLLLTCAAWLTYV) form a helical; Signal-anchor for type II membrane protein membrane-spanning segment. Topologically, residues 32-1034 (HRSLVRPGRA…SRKGARAQRS (1003 aa)) are lumenal. Residues 51–104 (DGEKLTGVTDSRGVRVPSSTQRSEDSSESHEEEQAPEGRGPNMLFPGGPRKPPP) are disordered. Positions 72 to 83 (RSEDSSESHEEE) are enriched in basic and acidic residues. N-linked (GlcNAc...) asparagine glycosylation occurs at Asn106. The region spanning 109–279 (HQTPPWREEF…LKFEIIDSAH (171 aa)) is the PA14 domain. 2 disordered regions span residues 450–486 (PTDA…DEQT) and 556–600 (RVQL…QLHG). Residues 461 to 473 (TPTPAASTGTTAS) are compositionally biased toward low complexity. Asn611 carries N-linked (GlcNAc...) asparagine glycosylation. Disordered regions lie at residues 626–669 (SQVS…PLGR) and 782–801 (GDED…HPDS). Residues 636–661 (EGEEGEEDGAPGDEATSEDSEEEEEP) are compositionally biased toward acidic residues.

Belongs to the chondroitin N-acetylgalactosaminyltransferase family.

The protein localises to the golgi apparatus. It is found in the golgi stack membrane. The enzyme catalyses an N-acetyl-beta-D-glucosaminyl derivative + UDP-N-acetyl-alpha-D-galactosamine = an N-acetyl-beta-D-galactosaminyl-(1-&gt;4)-N-acetyl-beta-D-glucosaminyl derivative + UDP + H(+). Transfers N-acetylgalactosamine (GalNAc) from UDP-GalNAc to N-acetylglucosamine-beta-benzyl with a beta-1,4-linkage to form N,N'-diacetyllactosediamine, GalNAc-beta-1,4-GlcNAc structures in N-linked glycans and probably O-linked glycans. The polypeptide is N-acetyl-beta-glucosaminyl-glycoprotein 4-beta-N-acetylgalactosaminyltransferase 1 (B4galnt4) (Mus musculus (Mouse)).